Reading from the N-terminus, the 713-residue chain is Phenylalanine ammonia-lyase (713 aa).

Tyrosine 116 acts as the Proton donor/acceptor in catalysis. A cross-link (5-imidazolinone (Ala-Gly)) is located at residues 217–219 (ASG). Serine 218 is subject to 2,3-didehydroalanine (Ser). Positions 272, 362, 368, 399, 470, 498, and 501 each coordinate (E)-cinnamate.

This sequence belongs to the PAL/histidase family. Homotetramer. Post-translationally, contains an active site 4-methylidene-imidazol-5-one (MIO), which is formed autocatalytically by cyclization and dehydration of residues Ala-Ser-Gly.

Its subcellular location is the cytoplasm. The catalysed reaction is L-phenylalanine = (E)-cinnamate + NH4(+). The protein operates within phenylpropanoid metabolism; trans-cinnamate biosynthesis; trans-cinnamate from L-phenylalanine: step 1/1. Functionally, catalyzes the non-oxidative deamination of L-phenylalanine to form trans-cinnamic acid and a free ammonium ion. Facilitates the commitment step in phenylpropanoid pathways that produce secondary metabolites such as lignins, coumarins and flavonoids. The protein is Phenylalanine ammonia-lyase (PAL) of Rhodotorula mucilaginosa (Yeast).